A 369-amino-acid chain; its full sequence is Peptide chain release factor 2 (369 aa).

The residue at position 250 (glutamine 250) is an N5-methylglutamine.

Belongs to the prokaryotic/mitochondrial release factor family. Methylated by PrmC. Methylation increases the termination efficiency of RF2.

It is found in the cytoplasm. In terms of biological role, peptide chain release factor 2 directs the termination of translation in response to the peptide chain termination codons UGA and UAA. The protein is Peptide chain release factor 2 (prfB) of Rickettsia prowazekii (strain Madrid E).